Reading from the N-terminus, the 336-residue chain is F420-dependent glucose-6-phosphate dehydrogenase (336 aa).

Asp-39 is a coenzyme F420-(gamma-Glu)n binding site. The Proton donor role is filled by His-40. Coenzyme F420-(gamma-Glu)n is bound by residues Thr-76 and 107–108 (TG). The active-site Proton acceptor is Glu-109. Coenzyme F420-(gamma-Glu)n-binding positions include Asn-112, 177–178 (GG), and 180–181 (VV). The substrate site is built by Thr-195, Lys-198, Lys-259, and Arg-283.

This sequence belongs to the F420-dependent glucose-6-phosphate dehydrogenase family. In terms of assembly, homodimer.

The catalysed reaction is oxidized coenzyme F420-(gamma-L-Glu)(n) + D-glucose 6-phosphate + H(+) = 6-phospho-D-glucono-1,5-lactone + reduced coenzyme F420-(gamma-L-Glu)(n). Functionally, catalyzes the coenzyme F420-dependent oxidation of glucose 6-phosphate (G6P) to 6-phosphogluconolactone. Appears to have a role in resistance to oxidative stress, via its consumption of G6P that serves as a source of reducing power to combat oxidative stress in mycobacteria. The protein is F420-dependent glucose-6-phosphate dehydrogenase of Mycolicibacterium fortuitum (Mycobacterium fortuitum).